Consider the following 160-residue polypeptide: 2-C-methyl-D-erythritol 2,4-cyclodiphosphate synthase (160 aa).

Residues Asp-9 and His-11 each coordinate a divalent metal cation. Residues 9–11 and 35–36 each bind 4-CDP-2-C-methyl-D-erythritol 2-phosphate; these read DVH and HS. His-43 provides a ligand contact to a divalent metal cation. 4-CDP-2-C-methyl-D-erythritol 2-phosphate-binding positions include 57 to 59, 62 to 66, 133 to 136, Phe-140, and Arg-143; these read DIG, FPDTD, and TTTE.

This sequence belongs to the IspF family. As to quaternary structure, homotrimer. A divalent metal cation is required as a cofactor.

The catalysed reaction is 4-CDP-2-C-methyl-D-erythritol 2-phosphate = 2-C-methyl-D-erythritol 2,4-cyclic diphosphate + CMP. It participates in isoprenoid biosynthesis; isopentenyl diphosphate biosynthesis via DXP pathway; isopentenyl diphosphate from 1-deoxy-D-xylulose 5-phosphate: step 4/6. Its function is as follows. Involved in the biosynthesis of isopentenyl diphosphate (IPP) and dimethylallyl diphosphate (DMAPP), two major building blocks of isoprenoid compounds. Catalyzes the conversion of 4-diphosphocytidyl-2-C-methyl-D-erythritol 2-phosphate (CDP-ME2P) to 2-C-methyl-D-erythritol 2,4-cyclodiphosphate (ME-CPP) with a corresponding release of cytidine 5-monophosphate (CMP). This is 2-C-methyl-D-erythritol 2,4-cyclodiphosphate synthase from Haemophilus ducreyi (strain 35000HP / ATCC 700724).